The sequence spans 524 residues: MGIVINLFLIIFASVVFFAAGFFLGRFFLERLGTTKVLEAEERAVQIVQEAQKEANEYKELKVTEVNQEWKKKRREFDQEVVIKNNKFNQLQKQVQQREAQLKKQLQDVRDTERKLQDQQKELDQAMETVGIRATELERIITEQNQRLESISNLQADEARQMLVDNMITKAREEATETIHKIHEEAEENAGRLAEKTLLTAIQRISFEQATENALSVVHIQSDELKGRIIGREGRNIKAFENATGVDIIVDDTPEVVILSCFDPLRREHAKLTLKKLLADGVIHPVAIEKAYLDAGKEMADVIMSAGEEALASLQIPDMPAEIVRLIGTMKFHSVYGQNLLQHSREVAMLAGIMATELKLDPRLAKRAGLLHDIGLVLPDTDQPHALAASEFLRKFKESAVVLNAIAAHHGEAEKESPIAELVDAANVISLARPGARGAVTADGNVKRLESLEEIAKGFPGVLKTYALQAGREIRVIVEGDNVSDSQADVLAHDIAHKIESEAQYPGQIKVSIVRERRSVAYAK.

Residues 3–23 traverse the membrane as a helical segment; sequence IVINLFLIIFASVVFFAAGFF. The KH domain occupies 214-274; sequence ALSVVHIQSD…LRREHAKLTL (61 aa). The 93-residue stretch at 340–432 folds into the HD domain; it reads LLQHSREVAM…VDAANVISLA (93 aa).

Belongs to the RNase Y family.

Its subcellular location is the cell membrane. In terms of biological role, endoribonuclease that initiates mRNA decay. The protein is Ribonuclease Y of Chlorobium luteolum (strain DSM 273 / BCRC 81028 / 2530) (Pelodictyon luteolum).